The primary structure comprises 476 residues: Glutamate--tRNA ligase (476 aa).

Residues Pro-9 to Thr-19 carry the 'HIGH' region motif. The 'KMSKS' region motif lies at Lys-248–Arg-252. ATP is bound at residue Lys-251.

Belongs to the class-I aminoacyl-tRNA synthetase family. Glutamate--tRNA ligase type 1 subfamily. Monomer.

It is found in the cytoplasm. The catalysed reaction is tRNA(Glu) + L-glutamate + ATP = L-glutamyl-tRNA(Glu) + AMP + diphosphate. Catalyzes the attachment of glutamate to tRNA(Glu) in a two-step reaction: glutamate is first activated by ATP to form Glu-AMP and then transferred to the acceptor end of tRNA(Glu). The protein is Glutamate--tRNA ligase of Prochlorococcus marinus (strain NATL1A).